Consider the following 299-residue polypeptide: Small ribosomal subunit protein uS3 (299 aa).

One can recognise a KH type-2 domain in the interval 39-107 (VREYLKAKLK…PVAVNIEEVR (69 aa)). A disordered region spans residues 214 to 299 (PVIKTDERED…AVAPGDAKGE (86 aa)). The span at 217–248 (KTDEREDDRRNRRGPRSDRPAGDRRPPSRDGA) shows a compositional bias: basic and acidic residues. The segment covering 257 to 282 (ADAGAAAPTDKPADGAAPAAADGPKA) has biased composition (low complexity).

The protein belongs to the universal ribosomal protein uS3 family. As to quaternary structure, part of the 30S ribosomal subunit. Forms a tight complex with proteins S10 and S14.

In terms of biological role, binds the lower part of the 30S subunit head. Binds mRNA in the 70S ribosome, positioning it for translation. The sequence is that of Small ribosomal subunit protein uS3 from Methylibium petroleiphilum (strain ATCC BAA-1232 / LMG 22953 / PM1).